Reading from the N-terminus, the 248-residue chain is Protein canopy homolog 4 (248 aa).

An N-terminal signal peptide occupies residues 1 to 21 (MGPVRLGILLFLFLAVHEAWA). 3 disulfides stabilise this stretch: Cys38–Cys196, Cys41–Cys184, and Cys94–Cys156. The disordered stretch occupies residues 200–248 (TWTGKEITDGEEKTEGEEEQEEEEEEEEEEGGDKMTKTGSHPKLDREDL). Residues 213-230 (TEGEEEQEEEEEEEEEEG) show a composition bias toward acidic residues. A compositionally biased stretch (basic and acidic residues) spans 231–248 (GDKMTKTGSHPKLDREDL).

The protein belongs to the canopy family. Interacts with TLR4.

The protein localises to the secreted. In terms of biological role, plays a role in the regulation of the cell surface expression of TLR4. The sequence is that of Protein canopy homolog 4 (CNPY4) from Homo sapiens (Human).